The sequence spans 216 residues: Octanoyltransferase (216 aa).

One can recognise a BPL/LPL catalytic domain in the interval 24–212; sequence KFRKECILFL…NLCSFLEPIN (189 aa). Substrate-binding positions include 69–76, 140–142, and 153–155; these read RGGDFTAH, SIG, and GIA. Cysteine 171 serves as the catalytic Acyl-thioester intermediate.

This sequence belongs to the LipB family.

The protein resides in the cytoplasm. It catalyses the reaction octanoyl-[ACP] + L-lysyl-[protein] = N(6)-octanoyl-L-lysyl-[protein] + holo-[ACP] + H(+). Its pathway is protein modification; protein lipoylation via endogenous pathway; protein N(6)-(lipoyl)lysine from octanoyl-[acyl-carrier-protein]: step 1/2. Its function is as follows. Catalyzes the transfer of endogenously produced octanoic acid from octanoyl-acyl-carrier-protein onto the lipoyl domains of lipoate-dependent enzymes. Lipoyl-ACP can also act as a substrate although octanoyl-ACP is likely to be the physiological substrate. In Leptospira interrogans serogroup Icterohaemorrhagiae serovar copenhageni (strain Fiocruz L1-130), this protein is Octanoyltransferase.